The following is a 424-amino-acid chain: Serine--tRNA ligase (424 aa).

An L-serine-binding site is contributed by 233-235; the sequence is TAE. 264 to 266 is an ATP binding site; the sequence is RRE. Glutamate 287 is a binding site for L-serine. 351–354 is an ATP binding site; the sequence is EISS. Position 386 (serine 386) interacts with L-serine.

It belongs to the class-II aminoacyl-tRNA synthetase family. Type-1 seryl-tRNA synthetase subfamily. In terms of assembly, homodimer. The tRNA molecule binds across the dimer.

The protein resides in the cytoplasm. It catalyses the reaction tRNA(Ser) + L-serine + ATP = L-seryl-tRNA(Ser) + AMP + diphosphate + H(+). The catalysed reaction is tRNA(Sec) + L-serine + ATP = L-seryl-tRNA(Sec) + AMP + diphosphate + H(+). Its pathway is aminoacyl-tRNA biosynthesis; selenocysteinyl-tRNA(Sec) biosynthesis; L-seryl-tRNA(Sec) from L-serine and tRNA(Sec): step 1/1. Functionally, catalyzes the attachment of serine to tRNA(Ser). Is also able to aminoacylate tRNA(Sec) with serine, to form the misacylated tRNA L-seryl-tRNA(Sec), which will be further converted into selenocysteinyl-tRNA(Sec). The sequence is that of Serine--tRNA ligase from Petrotoga mobilis (strain DSM 10674 / SJ95).